Consider the following 92-residue polypeptide: Small ribosomal subunit protein uS19 (92 aa).

Belongs to the universal ribosomal protein uS19 family.

In terms of biological role, protein S19 forms a complex with S13 that binds strongly to the 16S ribosomal RNA. This chain is Small ribosomal subunit protein uS19, found in Aeromonas hydrophila subsp. hydrophila (strain ATCC 7966 / DSM 30187 / BCRC 13018 / CCUG 14551 / JCM 1027 / KCTC 2358 / NCIMB 9240 / NCTC 8049).